The primary structure comprises 270 residues: MANYTAADVKALREATGAGMLDCKKALDESQGDYDKAVEYLRIKGAKNVSKRAEREATEGLIAVSGNTMVEINCETDFVAKNEAFKSFASKIAEAAGEAKVNSGEELNNLEIDGKKVSEVVDEESAKTGEKLQARRAVTIEGDNVAVYLHQRSADLPPAVGVLVSYEGNAEGAHAVALQIAAMNAEYLTREDIPAEIVEKEREIAEATTREEGKPEAALPKIVEGRLNGFYKSVVLLEQASLSDSKKTVKQVADEAGTTITGFVRYEVGA.

The segment at 76-79 is involved in Mg(2+) ion dislocation from EF-Tu; sequence TDFV.

It belongs to the EF-Ts family.

The protein resides in the cytoplasm. In terms of biological role, associates with the EF-Tu.GDP complex and induces the exchange of GDP to GTP. It remains bound to the aminoacyl-tRNA.EF-Tu.GTP complex up to the GTP hydrolysis stage on the ribosome. The protein is Elongation factor Ts of Corynebacterium aurimucosum (strain ATCC 700975 / DSM 44827 / CIP 107346 / CN-1) (Corynebacterium nigricans).